The sequence spans 116 residues: S-adenosylmethionine decarboxylase proenzyme (116 aa).

Ser63 serves as the catalytic Schiff-base intermediate with substrate; via pyruvic acid. The residue at position 63 (Ser63) is a Pyruvic acid (Ser); by autocatalysis. His68 acts as the Proton acceptor; for processing activity in catalysis. Cys83 (proton donor; for catalytic activity) is an active-site residue.

Belongs to the prokaryotic AdoMetDC family. Type 1 subfamily. In terms of assembly, heterotetramer of two alpha and two beta chains arranged as a dimer of alpha/beta heterodimers. Requires pyruvate as cofactor. Is synthesized initially as an inactive proenzyme. Formation of the active enzyme involves a self-maturation process in which the active site pyruvoyl group is generated from an internal serine residue via an autocatalytic post-translational modification. Two non-identical subunits are generated from the proenzyme in this reaction, and the pyruvate is formed at the N-terminus of the alpha chain, which is derived from the carboxyl end of the proenzyme. The post-translation cleavage follows an unusual pathway, termed non-hydrolytic serinolysis, in which the side chain hydroxyl group of the serine supplies its oxygen atom to form the C-terminus of the beta chain, while the remainder of the serine residue undergoes an oxidative deamination to produce ammonia and the pyruvoyl group blocking the N-terminus of the alpha chain.

The enzyme catalyses S-adenosyl-L-methionine + H(+) = S-adenosyl 3-(methylsulfanyl)propylamine + CO2. The protein operates within amine and polyamine biosynthesis; S-adenosylmethioninamine biosynthesis; S-adenosylmethioninamine from S-adenosyl-L-methionine: step 1/1. Catalyzes the decarboxylation of S-adenosylmethionine to S-adenosylmethioninamine (dcAdoMet), the propylamine donor required for the synthesis of the polyamines spermine and spermidine from the diamine putrescine. This chain is S-adenosylmethionine decarboxylase proenzyme, found in Clostridium botulinum (strain Okra / Type B1).